Reading from the N-terminus, the 557-residue chain is MPERDSEPFSNPLAPDGHDVDDPHSFHQSKLTNEDFRKLLMTPRAAPTSAPPSKSRHHEMPREYNEDEDPAARRRKKKSYYAKLRQQEIERERELAEKYRDRAKERRDGVNKDYEETELISTTANYRAVGPTAEADKSAAEKRRQLIQESKFLGGDMEHTHLVKGLDFALLQKVRAEIASKEKEEEELMEKPQKETKKDEDPENKIEFKTRLGRNVYRMLFKSKSYERNELFLPGRMAYVVDLDDEYADTDIPTTLIRSKADCPTMEAQTTLTTNDIVISKLTQILSYLRQGTRNKKLKKKDKGKLEEKKPPEADMNIFEDIGDYVPSTTKTPRDKERERYRERERDRERDRDRERDRERDRERERERDREREREEEKKRHSYFEKPKVDDEPMDVDKGPGSAKELIKSINEKFAGSAGWEGTESLKKPEDKKQLGDFFGMSNSYAECYPATMDDMAVDSDEEVDYSKMDQGNKKGPLGRWDFDTQEEYSEYMNNKEALPKAAFQYGIKMSEGRKTRRFKETNDKAELDRQWKKISAIIEKRKRMEADGVEVKRPKY.

The segment at 1 to 90 is disordered; sequence MPERDSEPFS…YAKLRQQEIE (90 aa). Over residues 16-25 the composition is skewed to basic and acidic residues; the sequence is DGHDVDDPHS. A compositionally biased stretch (low complexity) spans 42–53; it reads TPRAAPTSAPPS. Lys98 and Lys137 each carry N6-acetyllysine. Lys151 is covalently cross-linked (Glycyl lysine isopeptide (Lys-Gly) (interchain with G-Cter in SUMO2)). Residues 181–205 form a disordered region; that stretch reads KEKEEEELMEKPQKETKKDEDPENK. At Ser287 the chain carries Phosphoserine. Residues 294-303 are compositionally biased toward basic residues; it reads RNKKLKKKDK. The disordered stretch occupies residues 294–402; it reads RNKKLKKKDK…PMDVDKGPGS (109 aa). The span at 304–313 shows a compositional bias: basic and acidic residues; that stretch reads GKLEEKKPPE. Glycyl lysine isopeptide (Lys-Gly) (interchain with G-Cter in SUMO2) cross-links involve residues Lys310 and Lys331. A compositionally biased stretch (basic and acidic residues) spans 332 to 398; it reads TPRDKERERY…VDDEPMDVDK (67 aa). 17 consecutive repeat copies span residues 342 to 343, 344 to 345, 346 to 347, 348 to 349, 350 to 351, 352 to 353, 354 to 355, 356 to 357, 358 to 359, 360 to 361, 362 to 363, 364 to 365, 366 to 367, 368 to 369, 370 to 371, 372 to 373, and 374 to 375. The segment at 342–375 is 17 X 2 AA tandem repeats of R-[ED]; that stretch reads RERERDRERDRDRERDRERDRERERERDRERERE. Glycyl lysine isopeptide (Lys-Gly) (interchain with G-Cter in SUMO2) cross-links involve residues Lys386, Lys388, Lys404, and Lys408. Residues Ser417 and Ser460 each carry the phosphoserine modification. Thr485 bears the Phosphothreonine mark. Residues Lys496, Lys501, and Lys509 each participate in a glycyl lysine isopeptide (Lys-Gly) (interchain with G-Cter in SUMO2) cross-link. The residue at position 536 (Ser536) is a Phosphoserine. Glycyl lysine isopeptide (Lys-Gly) (interchain with G-Cter in SUMO2) cross-links involve residues Lys541, Lys543, and Lys553.

The protein belongs to the RED family. As to quaternary structure, component of the spliceosome B complex. Interacts with SMU1. Interacts with MAD1L1. May interact with DHX15. Ubiquitous.

It localises to the nucleus. The protein resides in the nucleoplasm. It is found in the chromosome. Its subcellular location is the cytoplasm. The protein localises to the cytoskeleton. It localises to the spindle pole. Functionally, involved in pre-mRNA splicing as a component of the spliceosome. Auxiliary spliceosomal protein that regulates selection of alternative splice sites in a small set of target pre-mRNA species. Required for normal mitotic cell cycle progression. Recruits MAD1L1 and MAD2L1 to kinetochores, and is required to trigger the spindle assembly checkpoint. Required for normal accumulation of SMU1. The polypeptide is Protein Red (Ik) (Mus musculus (Mouse)).